We begin with the raw amino-acid sequence, 191 residues long: Ribonuclease M5 (191 aa).

Residues 8-91 enclose the Toprim domain; sequence HEFIVVEGRD…AFINRQDALP (84 aa). 3 residues coordinate Mg(2+): glutamate 14, aspartate 60, and aspartate 62.

This sequence belongs to the ribonuclease M5 family. Mg(2+) is required as a cofactor.

Its subcellular location is the cytoplasm. The enzyme catalyses Endonucleolytic cleavage of RNA, removing 21 and 42 nucleotides, respectively, from the 5'- and 3'-termini of a 5S-rRNA precursor.. In terms of biological role, required for correct processing of both the 5' and 3' ends of 5S rRNA precursor. Cleaves both sides of a double-stranded region yielding mature 5S rRNA in one step. The chain is Ribonuclease M5 from Listeria monocytogenes serovar 1/2a (strain ATCC BAA-679 / EGD-e).